The following is a 129-amino-acid chain: Methylmalonyl-CoA decarboxylase subunit gamma (129 aa).

Composition is skewed to low complexity over residues 24–39 and 49–58; these read APAA…APAP and PAAAAAPVPA. The interval 24–58 is disordered; it reads APAAAPKAAPAAAPAPKAAPAPAPAPAAAAAPVPA. The 79-residue stretch at 51-129 folds into the Biotinyl-binding domain; the sequence is AAAAPVPAGA…STGDDMVVLG (79 aa). Lys-95 carries the N6-biotinyllysine modification.

In terms of assembly, the methylmalonyl-CoA decarboxylase is composed of five subunits: the carboxyltransferase alpha subunit (MmdA), the tunnel beta subunit (MmdB), the biotin-containing gamma subunit (MmdC), and the delta (MmdD) and epsilon (MmdE) subunits. Biotin serves as cofactor.

It is found in the cell membrane. It catalyses the reaction (S)-methylmalonyl-CoA + Na(+)(in) + H(+)(out) = propanoyl-CoA + Na(+)(out) + CO2. With respect to regulation, completely inhibited by avidin. Biotin-containing subunit of the sodium ion pump methylmalonyl-CoA decarboxylase, which converts the chemical energy of a decarboxylation reaction into an electrochemical gradient of Na(+) ions across the cytoplasmic membrane, thereby creating a sodium ion motive force that is used for ATP synthesis. Can also convert malonyl-CoA into acetyl-CoA. This is Methylmalonyl-CoA decarboxylase subunit gamma from Veillonella parvula (Staphylococcus parvulus).